The sequence spans 181 residues: Deoxyuridine 5'-triphosphate nucleotidohydrolase (181 aa).

Substrate-binding positions include 96–98 (RSG), N109, 113–115 (TVD), and K123.

This sequence belongs to the dUTPase family. The cofactor is Mg(2+).

It catalyses the reaction dUTP + H2O = dUMP + diphosphate + H(+). It participates in pyrimidine metabolism; dUMP biosynthesis; dUMP from dCTP (dUTP route): step 2/2. Functionally, this enzyme is involved in nucleotide metabolism: it produces dUMP, the immediate precursor of thymidine nucleotides and it decreases the intracellular concentration of dUTP so that uracil cannot be incorporated into DNA. This Corynebacterium efficiens (strain DSM 44549 / YS-314 / AJ 12310 / JCM 11189 / NBRC 100395) protein is Deoxyuridine 5'-triphosphate nucleotidohydrolase.